The chain runs to 787 residues: MTDYSSKEYFDKLEKFWRAANYLSVGQLYLKDNPLLKRDIKPEDVKVHPIGHWGTIPGQNYIYAHLNRVINKYGVNMFYVEGPGHGGQVMVSNSYLDGSYTEAYPAITQDEEGMKKLFKQFSWPGGVASHAAPVTPGSIHEGGELGYSLSHGVGAILDNPDQIAAVVVGDGEAETGPLAASWQHNRFINPITDGAVLPILDINGYKLSNPSLTSRMSDEELTEFFHGQHWDPYFVEGDDSEAMDPKMAEVMDKAIEKIQEIQKNARENHDETMPYWPVIVFRSPKGWTGPKTWDNKVIEGTFRAHQIPIPVDQKNLEHVDALIDWMKSYKPEELFDENGRVLPEIAEIAPKGEKRMASNPITNGGVNPTDLNLPDYRDYAVDTTKRGQNIKQDMLVWSDYLRDVITKNPTNFRMFGPDETMSNRLYGLFEVTNRQFVAPIKKDWDEALAPEGRILDAQLSEHSAEGWLETYTLTGRHGIFTSYEAFLRVVDSMITQHFKWLRKADELDWRNDYPSLNLVSTSTSFQQDHNGYTHQDPGLLTHLAEKKPEFIREYLPADANSLLAISPLVMNDRNKINLIIASKQPRPQFYSMEEAEVLAKNGLGIIDWASTTNGEEPDVVFAAAGTEPNMESLAAINILHDNFPDLKIRFINVVDLLKLQSPKVNPNGLSDEEFDRYFTKDKPVIFTFHGFEDLIRSIFFDRHNHNLHVHGYREEGDITTPFDMRVLNELDRFHLAQDTINSIPEFAEKGADFSQQMDNTLERHYQYIRDNGDDLPEVTNWTWKDVN.

It belongs to the XFP family. It depends on thiamine diphosphate as a cofactor.

This chain is Probable phosphoketolase, found in Pediococcus pentosaceus (strain ATCC 25745 / CCUG 21536 / LMG 10740 / 183-1w).